A 190-amino-acid polypeptide reads, in one-letter code: uncharacterized protein (190 aa).

Positions 1–58 constitute an HTH tetR-type domain; the sequence is MDKRILAETFRLIKQKGFSFTMNDLAAALGTSKRTLYAYYSSKDQLVEAVVEQFIAEM. Positions 21-40 form a DNA-binding region, H-T-H motif; it reads TMNDLAAALGTSKRTLYAYY.

This is an uncharacterized protein from Bacillus subtilis (strain 168).